Reading from the N-terminus, the 416-residue chain is Enolase (416 aa).

Residue Q156 coordinates (2R)-2-phosphoglycerate. The active-site Proton donor is the E200. Residues D236, E281, and D308 each coordinate Mg(2+). (2R)-2-phosphoglycerate-binding residues include K333, R362, S363, and K384. The active-site Proton acceptor is K333.

Belongs to the enolase family. Requires Mg(2+) as cofactor.

It localises to the cytoplasm. The protein localises to the secreted. Its subcellular location is the cell surface. The enzyme catalyses (2R)-2-phosphoglycerate = phosphoenolpyruvate + H2O. Its pathway is carbohydrate degradation; glycolysis; pyruvate from D-glyceraldehyde 3-phosphate: step 4/5. Functionally, catalyzes the reversible conversion of 2-phosphoglycerate (2-PG) into phosphoenolpyruvate (PEP). It is essential for the degradation of carbohydrates via glycolysis. The polypeptide is Enolase (Methanothermobacter thermautotrophicus (strain ATCC 29096 / DSM 1053 / JCM 10044 / NBRC 100330 / Delta H) (Methanobacterium thermoautotrophicum)).